A 79-amino-acid polypeptide reads, in one-letter code: Small cysteine-rich protein 2 (79 aa).

A signal peptide spans 1–21 (MRSQHVLILLLGLVCASQVLG). Residues 22–35 (KHLTKVKAKALHYD) constitute a propeptide that is removed on maturation.

The protein belongs to the Cnidaria small cysteine-rich protein (SCRiP) family. delta subfamily. Contains 4 disulfide bonds.

It is found in the secreted. It localises to the nematocyst. This recombinant protein induces severe neurotoxicity on zebrafish larvae (Danio rerio) at a concentration of 230 mg/ml, but does not show toxicity when injected in blowfly larvae (Sarcophaga falculata). All fish incubated with this protein died within 200 minutes of exposure. Has also been claimed to be implied in calcification, but this function seems improbable. This is Small cysteine-rich protein 2 from Acropora millepora (Staghorn coral).